The primary structure comprises 246 residues: NADH-quinone oxidoreductase subunit C (246 aa).

The protein belongs to the complex I 30 kDa subunit family. In terms of assembly, NDH-1 is composed of 14 different subunits. Subunits NuoB, C, D, E, F, and G constitute the peripheral sector of the complex.

It localises to the cell inner membrane. It carries out the reaction a quinone + NADH + 5 H(+)(in) = a quinol + NAD(+) + 4 H(+)(out). In terms of biological role, NDH-1 shuttles electrons from NADH, via FMN and iron-sulfur (Fe-S) centers, to quinones in the respiratory chain. The immediate electron acceptor for the enzyme in this species is believed to be ubiquinone. Couples the redox reaction to proton translocation (for every two electrons transferred, four hydrogen ions are translocated across the cytoplasmic membrane), and thus conserves the redox energy in a proton gradient. The polypeptide is NADH-quinone oxidoreductase subunit C (Halorhodospira halophila (strain DSM 244 / SL1) (Ectothiorhodospira halophila (strain DSM 244 / SL1))).